Reading from the N-terminus, the 346-residue chain is G-protein coupled receptor homolog U12 (346 aa).

Residues 1 to 31 (MICYSFAKNVTFAFLIILQNFFSQHDEEYKY) are Extracellular-facing. Residues 32 to 56 (NYTCITPTVRKAQRLESVINGIMLT) form a helical membrane-spanning segment. At 57–83 (LILPVSTVVICTLLIYYKWTKQTITSP) the chain is on the cytoplasmic side. Residues 84-108 (YLITLFISDSLHSLTVLLLTLNREA) form a helical membrane-spanning segment. The Extracellular portion of the chain corresponds to 109 to 115 (LTNLNQA). The helical transmembrane segment at 116-142 (LCQCVLFVYSASCTYSLCMLAVISTIR) threads the bilayer. Residues 143 to 159 (YRTLQRRTLNDKNNNHI) are Cytoplasmic-facing. A helical membrane pass occupies residues 160–181 (KRNVGILFLSSAMCAIPAVLYV). The Extracellular segment spans residues 182–208 (QVEKKKGNYGKCNIHISTQKAYDLFIG). Residues 209–229 (IKIVYCFLWGIFPTVIFSYFY) traverse the membrane as a helical segment. Topologically, residues 230–245 (VIFGKTLRALTQSKHN) are cytoplasmic. A helical membrane pass occupies residues 246–272 (KTLSFISLLILSFLCIQIPNLLVMSVE). Over 273 to 286 (IFFLYIANTSCLGT) the chain is Extracellular. Residues 287 to 310 (IQREIVQIISRLMPEIHCLSNPLV) form a helical membrane-spanning segment. At 311–346 (YAFTRTDFRLRFYDFIKCNLCNSSLKRKRNPLTIKN) the chain is on the cytoplasmic side.

Belongs to the G-protein coupled receptor 1 family.

Its subcellular location is the host cell membrane. This chain is G-protein coupled receptor homolog U12 (U12), found in Homo sapiens (Human).